Reading from the N-terminus, the 211-residue chain is 2,3-bisphosphoglycerate-dependent phosphoglycerate mutase (211 aa).

Substrate contacts are provided by residues Arg9–Asn16, Thr22–Gly23, Arg61, Glu88–Tyr91, Lys99, Arg115–Arg116, and Gly159–Asn160. The active-site Tele-phosphohistidine intermediate is the His10. Glu88 serves as the catalytic Proton donor/acceptor.

The protein belongs to the phosphoglycerate mutase family. BPG-dependent PGAM subfamily. In terms of assembly, homodimer.

It catalyses the reaction (2R)-2-phosphoglycerate = (2R)-3-phosphoglycerate. Its pathway is carbohydrate degradation; glycolysis; pyruvate from D-glyceraldehyde 3-phosphate: step 3/5. Functionally, catalyzes the interconversion of 2-phosphoglycerate and 3-phosphoglycerate. In Rhizobium johnstonii (strain DSM 114642 / LMG 32736 / 3841) (Rhizobium leguminosarum bv. viciae), this protein is 2,3-bisphosphoglycerate-dependent phosphoglycerate mutase.